The primary structure comprises 314 residues: Aspartate carbamoyltransferase catalytic subunit (314 aa).

Carbamoyl phosphate-binding residues include Arg-58 and Thr-59. Lys-86 provides a ligand contact to L-aspartate. The carbamoyl phosphate site is built by Arg-108, His-136, and Gln-139. 2 residues coordinate L-aspartate: Arg-169 and Arg-223. Residues Gly-264 and Pro-265 each contribute to the carbamoyl phosphate site.

Belongs to the aspartate/ornithine carbamoyltransferase superfamily. ATCase family. As to quaternary structure, heterododecamer (2C3:3R2) of six catalytic PyrB chains organized as two trimers (C3), and six regulatory PyrI chains organized as three dimers (R2).

It carries out the reaction carbamoyl phosphate + L-aspartate = N-carbamoyl-L-aspartate + phosphate + H(+). The protein operates within pyrimidine metabolism; UMP biosynthesis via de novo pathway; (S)-dihydroorotate from bicarbonate: step 2/3. Its function is as follows. Catalyzes the condensation of carbamoyl phosphate and aspartate to form carbamoyl aspartate and inorganic phosphate, the committed step in the de novo pyrimidine nucleotide biosynthesis pathway. The sequence is that of Aspartate carbamoyltransferase catalytic subunit from Roseobacter denitrificans (strain ATCC 33942 / OCh 114) (Erythrobacter sp. (strain OCh 114)).